The primary structure comprises 351 residues: NADP-dependent isopropanol dehydrogenase (351 aa).

4 residues coordinate Zn(2+): Cys37, His59, Glu60, and Asp150. NADP(+) is bound by residues 175–178, 198–200, Tyr218, 265–267, and Lys340; these read IGAV, GSR, and INY.

This sequence belongs to the zinc-containing alcohol dehydrogenase family. Homotetramer. It depends on Zn(2+) as a cofactor.

It carries out the reaction propan-2-ol + NADP(+) = acetone + NADPH + H(+). In terms of biological role, alcohol dehydrogenase with a preference for medium chain secondary alcohols, such as 2-butanol and isopropanol. Has very low activity with primary alcohols, such as ethanol. Under physiological conditions, the enzyme reduces aldehydes and 2-ketones to produce secondary alcohols. Is active with acetaldehyde and propionaldehyde. This is NADP-dependent isopropanol dehydrogenase (adh) from Clostridium beijerinckii (Clostridium MP).